The following is a 356-amino-acid chain: Putative aminopeptidase FrvX (356 aa).

2 residues coordinate a divalent metal cation: H61 and D175. Catalysis depends on E205, which acts as the Proton acceptor. E206, D228, and H316 together coordinate a divalent metal cation.

It belongs to the peptidase M42 family. A divalent metal cation serves as cofactor.

The chain is Putative aminopeptidase FrvX (frvX) from Escherichia coli (strain K12).